The following is a 226-amino-acid chain: UPF0758 protein M6_Spy0838 (226 aa).

The 123-residue stretch at 103–225 (SVLTSVQVAE…YYSFREKSTL (123 aa)) folds into the MPN domain. The Zn(2+) site is built by His174, His176, and Asp187. Positions 174–187 (HNHPSGNIEPSSND) match the JAMM motif motif.

This sequence belongs to the UPF0758 family.

This is UPF0758 protein M6_Spy0838 from Streptococcus pyogenes serotype M6 (strain ATCC BAA-946 / MGAS10394).